Here is a 502-residue protein sequence, read N- to C-terminus: Probable cytochrome P450 6a23 (502 aa).

Cysteine 445 contacts heme.

Belongs to the cytochrome P450 family. Heme is required as a cofactor.

Its subcellular location is the endoplasmic reticulum membrane. It is found in the microsome membrane. Its function is as follows. May be involved in the metabolism of insect hormones and in the breakdown of synthetic insecticides. This chain is Probable cytochrome P450 6a23 (Cyp6a23), found in Drosophila melanogaster (Fruit fly).